The primary structure comprises 254 residues: Ribonuclease PH (254 aa).

Phosphate-binding positions include Arg-86 and 124–126 (GTR).

This sequence belongs to the RNase PH family. In terms of assembly, homohexameric ring arranged as a trimer of dimers.

The enzyme catalyses tRNA(n+1) + phosphate = tRNA(n) + a ribonucleoside 5'-diphosphate. In terms of biological role, phosphorolytic 3'-5' exoribonuclease that plays an important role in tRNA 3'-end maturation. Removes nucleotide residues following the 3'-CCA terminus of tRNAs; can also add nucleotides to the ends of RNA molecules by using nucleoside diphosphates as substrates, but this may not be physiologically important. Probably plays a role in initiation of 16S rRNA degradation (leading to ribosome degradation) during starvation. The chain is Ribonuclease PH from Carboxydothermus hydrogenoformans (strain ATCC BAA-161 / DSM 6008 / Z-2901).